Reading from the N-terminus, the 489-residue chain is Bifunctional protein HldE (489 aa).

The segment at 1–330 (MFDFDGLSNA…RKILPPAFLA (330 aa)) is ribokinase. Residue 205-208 (NRKE) participates in ATP binding. Residue aspartate 275 is part of the active site. Residues 358 to 489 (FTNGCFDILH…SLVKRAGGRA (132 aa)) form a cytidylyltransferase region.

This sequence in the N-terminal section; belongs to the carbohydrate kinase PfkB family. It in the C-terminal section; belongs to the cytidylyltransferase family. Homodimer.

It catalyses the reaction D-glycero-beta-D-manno-heptose 7-phosphate + ATP = D-glycero-beta-D-manno-heptose 1,7-bisphosphate + ADP + H(+). The enzyme catalyses D-glycero-beta-D-manno-heptose 1-phosphate + ATP + H(+) = ADP-D-glycero-beta-D-manno-heptose + diphosphate. It participates in nucleotide-sugar biosynthesis; ADP-L-glycero-beta-D-manno-heptose biosynthesis; ADP-L-glycero-beta-D-manno-heptose from D-glycero-beta-D-manno-heptose 7-phosphate: step 1/4. Its pathway is nucleotide-sugar biosynthesis; ADP-L-glycero-beta-D-manno-heptose biosynthesis; ADP-L-glycero-beta-D-manno-heptose from D-glycero-beta-D-manno-heptose 7-phosphate: step 3/4. Functionally, catalyzes the phosphorylation of D-glycero-D-manno-heptose 7-phosphate at the C-1 position to selectively form D-glycero-beta-D-manno-heptose-1,7-bisphosphate. In terms of biological role, catalyzes the ADP transfer from ATP to D-glycero-beta-D-manno-heptose 1-phosphate, yielding ADP-D-glycero-beta-D-manno-heptose. The protein is Bifunctional protein HldE of Nitrobacter hamburgensis (strain DSM 10229 / NCIMB 13809 / X14).